Here is a 246-residue protein sequence, read N- to C-terminus: Orotidine 5'-phosphate decarboxylase (246 aa).

Substrate-binding positions include Asp-18, Lys-39, 66–75 (DLKFHDIPAT), Thr-130, Arg-192, Gln-201, Gly-221, and Arg-222. Residue Lys-68 is the Proton donor of the active site.

This sequence belongs to the OMP decarboxylase family. Type 1 subfamily. In terms of assembly, homodimer.

The catalysed reaction is orotidine 5'-phosphate + H(+) = UMP + CO2. It functions in the pathway pyrimidine metabolism; UMP biosynthesis via de novo pathway; UMP from orotate: step 2/2. Catalyzes the decarboxylation of orotidine 5'-monophosphate (OMP) to uridine 5'-monophosphate (UMP). This is Orotidine 5'-phosphate decarboxylase from Parasynechococcus marenigrum (strain WH8102).